The following is an 89-amino-acid chain: Large ribosomal subunit protein bL27 (89 aa).

The tract at residues 1–26 (MAHKKGVGSSRNGRDSESKRLGVKEG) is disordered. Residues 12-26 (NGRDSESKRLGVKEG) are compositionally biased toward basic and acidic residues.

Belongs to the bacterial ribosomal protein bL27 family.

In Desulforamulus reducens (strain ATCC BAA-1160 / DSM 100696 / MI-1) (Desulfotomaculum reducens), this protein is Large ribosomal subunit protein bL27.